A 368-amino-acid chain; its full sequence is UDP-N-acetylglucosamine--N-acetylmuramyl-(pentapeptide) pyrophosphoryl-undecaprenol N-acetylglucosamine transferase (368 aa).

UDP-N-acetyl-alpha-D-glucosamine is bound by residues 13 to 15 (TGG), asparagine 124, arginine 167, serine 195, and glutamine 296.

The protein belongs to the glycosyltransferase 28 family. MurG subfamily.

It is found in the cell inner membrane. It catalyses the reaction di-trans,octa-cis-undecaprenyl diphospho-N-acetyl-alpha-D-muramoyl-L-alanyl-D-glutamyl-meso-2,6-diaminopimeloyl-D-alanyl-D-alanine + UDP-N-acetyl-alpha-D-glucosamine = di-trans,octa-cis-undecaprenyl diphospho-[N-acetyl-alpha-D-glucosaminyl-(1-&gt;4)]-N-acetyl-alpha-D-muramoyl-L-alanyl-D-glutamyl-meso-2,6-diaminopimeloyl-D-alanyl-D-alanine + UDP + H(+). The protein operates within cell wall biogenesis; peptidoglycan biosynthesis. Cell wall formation. Catalyzes the transfer of a GlcNAc subunit on undecaprenyl-pyrophosphoryl-MurNAc-pentapeptide (lipid intermediate I) to form undecaprenyl-pyrophosphoryl-MurNAc-(pentapeptide)GlcNAc (lipid intermediate II). The protein is UDP-N-acetylglucosamine--N-acetylmuramyl-(pentapeptide) pyrophosphoryl-undecaprenol N-acetylglucosamine transferase of Maricaulis maris (strain MCS10) (Caulobacter maris).